A 274-amino-acid chain; its full sequence is Dermonecrotic toxin SdSicTox-betaIIB1bvii (274 aa).

Histidine 5 is an active-site residue. Mg(2+)-binding residues include glutamate 25 and aspartate 27. Histidine 41 acts as the Nucleophile in catalysis. 2 disulfides stabilise this stretch: cysteine 45–cysteine 51 and cysteine 47–cysteine 190. Mg(2+) is bound at residue aspartate 85.

Belongs to the arthropod phospholipase D family. Class II subfamily. Mg(2+) is required as a cofactor. In terms of tissue distribution, expressed by the venom gland.

The protein resides in the secreted. It catalyses the reaction an N-(acyl)-sphingosylphosphocholine = an N-(acyl)-sphingosyl-1,3-cyclic phosphate + choline. It carries out the reaction an N-(acyl)-sphingosylphosphoethanolamine = an N-(acyl)-sphingosyl-1,3-cyclic phosphate + ethanolamine. The catalysed reaction is a 1-acyl-sn-glycero-3-phosphocholine = a 1-acyl-sn-glycero-2,3-cyclic phosphate + choline. The enzyme catalyses a 1-acyl-sn-glycero-3-phosphoethanolamine = a 1-acyl-sn-glycero-2,3-cyclic phosphate + ethanolamine. Its function is as follows. Dermonecrotic toxins cleave the phosphodiester linkage between the phosphate and headgroup of certain phospholipids (sphingolipid and lysolipid substrates), forming an alcohol (often choline) and a cyclic phosphate. This toxin acts on sphingomyelin (SM). It may also act on ceramide phosphoethanolamine (CPE), lysophosphatidylcholine (LPC) and lysophosphatidylethanolamine (LPE), but not on lysophosphatidylserine (LPS), and lysophosphatidylglycerol (LPG). It acts by transphosphatidylation, releasing exclusively cyclic phosphate products as second products. Induces dermonecrosis, hemolysis, increased vascular permeability, edema, inflammatory response, and platelet aggregation. The polypeptide is Dermonecrotic toxin SdSicTox-betaIIB1bvii (Sicarius cf. damarensis (strain GJB-2008) (Six-eyed sand spider)).